We begin with the raw amino-acid sequence, 339 residues long: Ketol-acid reductoisomerase (NADP(+)) (339 aa).

The KARI N-terminal Rossmann domain maps to 1–182 (MRVYYDRDAD…GGGRSGVIET (182 aa)). Residues 24–27 (YGSQ), R48, S51, T53, and 83–86 (DELQ) contribute to the NADP(+) site. H108 is a catalytic residue. NADP(+) is bound at residue G134. The 146-residue stretch at 183–328 (TFKEECETDL…GKLRAMMPWI (146 aa)) folds into the KARI C-terminal knotted domain. Residues D191, E195, E227, and E231 each contribute to the Mg(2+) site. S252 serves as a coordination point for substrate.

This sequence belongs to the ketol-acid reductoisomerase family. Mg(2+) serves as cofactor.

The catalysed reaction is (2R)-2,3-dihydroxy-3-methylbutanoate + NADP(+) = (2S)-2-acetolactate + NADPH + H(+). It catalyses the reaction (2R,3R)-2,3-dihydroxy-3-methylpentanoate + NADP(+) = (S)-2-ethyl-2-hydroxy-3-oxobutanoate + NADPH + H(+). The protein operates within amino-acid biosynthesis; L-isoleucine biosynthesis; L-isoleucine from 2-oxobutanoate: step 2/4. Its pathway is amino-acid biosynthesis; L-valine biosynthesis; L-valine from pyruvate: step 2/4. In terms of biological role, involved in the biosynthesis of branched-chain amino acids (BCAA). Catalyzes an alkyl-migration followed by a ketol-acid reduction of (S)-2-acetolactate (S2AL) to yield (R)-2,3-dihydroxy-isovalerate. In the isomerase reaction, S2AL is rearranged via a Mg-dependent methyl migration to produce 3-hydroxy-3-methyl-2-ketobutyrate (HMKB). In the reductase reaction, this 2-ketoacid undergoes a metal-dependent reduction by NADPH to yield (R)-2,3-dihydroxy-isovalerate. The sequence is that of Ketol-acid reductoisomerase (NADP(+)) from Brucella melitensis biotype 2 (strain ATCC 23457).